A 252-amino-acid polypeptide reads, in one-letter code: 2-succinyl-6-hydroxy-2,4-cyclohexadiene-1-carboxylate synthase (252 aa).

Belongs to the AB hydrolase superfamily. MenH family. As to quaternary structure, monomer.

The enzyme catalyses 5-enolpyruvoyl-6-hydroxy-2-succinyl-cyclohex-3-ene-1-carboxylate = (1R,6R)-6-hydroxy-2-succinyl-cyclohexa-2,4-diene-1-carboxylate + pyruvate. Its pathway is quinol/quinone metabolism; 1,4-dihydroxy-2-naphthoate biosynthesis; 1,4-dihydroxy-2-naphthoate from chorismate: step 3/7. It functions in the pathway quinol/quinone metabolism; menaquinone biosynthesis. Its function is as follows. Catalyzes a proton abstraction reaction that results in 2,5-elimination of pyruvate from 2-succinyl-5-enolpyruvyl-6-hydroxy-3-cyclohexene-1-carboxylate (SEPHCHC) and the formation of 2-succinyl-6-hydroxy-2,4-cyclohexadiene-1-carboxylate (SHCHC). The sequence is that of 2-succinyl-6-hydroxy-2,4-cyclohexadiene-1-carboxylate synthase from Escherichia fergusonii (strain ATCC 35469 / DSM 13698 / CCUG 18766 / IAM 14443 / JCM 21226 / LMG 7866 / NBRC 102419 / NCTC 12128 / CDC 0568-73).